We begin with the raw amino-acid sequence, 176 residues long: Ribosome maturation factor RimM (176 aa).

One can recognise a PRC barrel domain in the interval 99 to 176 (EDEYYWSDLV…RMVVDWERDF (78 aa)).

It belongs to the RimM family. As to quaternary structure, binds ribosomal protein uS19.

It is found in the cytoplasm. An accessory protein needed during the final step in the assembly of 30S ribosomal subunit, possibly for assembly of the head region. Essential for efficient processing of 16S rRNA. May be needed both before and after RbfA during the maturation of 16S rRNA. It has affinity for free ribosomal 30S subunits but not for 70S ribosomes. The chain is Ribosome maturation factor RimM from Psychrobacter sp. (strain PRwf-1).